The following is a 432-amino-acid chain: Homogentisate 1,2-dioxygenase (432 aa).

The active-site Proton acceptor is the His287. Residues His330 and Glu336 each coordinate Fe cation. Homogentisate contacts are provided by Tyr345 and His366. His366 contacts Fe cation.

Belongs to the homogentisate dioxygenase family. In terms of assembly, hexamer; dimer of trimers. Fe cation is required as a cofactor.

The enzyme catalyses homogentisate + O2 = 4-maleylacetoacetate + H(+). It participates in amino-acid degradation; L-phenylalanine degradation; acetoacetate and fumarate from L-phenylalanine: step 4/6. Its function is as follows. Involved in the catabolism of homogentisate (2,5-dihydroxyphenylacetate or 2,5-OH-PhAc), a central intermediate in the degradation of phenylalanine and tyrosine. Catalyzes the oxidative ring cleavage of the aromatic ring of homogentisate to yield maleylacetoacetate. The sequence is that of Homogentisate 1,2-dioxygenase from Pseudomonas aeruginosa (strain UCBPP-PA14).